The following is a 103-amino-acid chain: Large ribosomal subunit protein bL21 (103 aa).

The protein belongs to the bacterial ribosomal protein bL21 family. Part of the 50S ribosomal subunit. Contacts protein L20.

Functionally, this protein binds to 23S rRNA in the presence of protein L20. This chain is Large ribosomal subunit protein bL21, found in Lactobacillus acidophilus (strain ATCC 700396 / NCK56 / N2 / NCFM).